A 496-amino-acid polypeptide reads, in one-letter code: Glycerol kinase (496 aa).

Threonine 12 provides a ligand contact to ADP. 3 residues coordinate ATP: threonine 12, threonine 13, and serine 14. A sn-glycerol 3-phosphate-binding site is contributed by threonine 12. Arginine 16 is a binding site for ADP. Sn-glycerol 3-phosphate-binding residues include arginine 82, glutamate 83, and tyrosine 134. Residues arginine 82, glutamate 83, and tyrosine 134 each coordinate glycerol. Histidine 230 is modified (phosphohistidine; by HPr). A sn-glycerol 3-phosphate-binding site is contributed by aspartate 244. 2 residues coordinate glycerol: aspartate 244 and glutamine 245. Residues threonine 266 and glycine 309 each contribute to the ADP site. ATP-binding residues include threonine 266, glycine 309, glutamine 313, and glycine 410. ADP-binding residues include glycine 410 and asparagine 414.

This sequence belongs to the FGGY kinase family. In terms of assembly, homotetramer and homodimer (in equilibrium). The phosphoenolpyruvate-dependent sugar phosphotransferase system (PTS), including enzyme I, and histidine-containing protein (HPr) are required for the phosphorylation, which leads to the activation of the enzyme.

It carries out the reaction glycerol + ATP = sn-glycerol 3-phosphate + ADP + H(+). It participates in polyol metabolism; glycerol degradation via glycerol kinase pathway; sn-glycerol 3-phosphate from glycerol: step 1/1. Activated by phosphorylation and inhibited by fructose 1,6-bisphosphate (FBP). Functionally, key enzyme in the regulation of glycerol uptake and metabolism. Catalyzes the phosphorylation of glycerol to yield sn-glycerol 3-phosphate. This Geobacillus sp. (strain WCH70) protein is Glycerol kinase.